We begin with the raw amino-acid sequence, 467 residues long: UDP-N-acetylmuramate--L-alanine ligase (467 aa).

Position 121-127 (121-127 (GSHGKTT)) interacts with ATP.

Belongs to the MurCDEF family.

Its subcellular location is the cytoplasm. It catalyses the reaction UDP-N-acetyl-alpha-D-muramate + L-alanine + ATP = UDP-N-acetyl-alpha-D-muramoyl-L-alanine + ADP + phosphate + H(+). It functions in the pathway cell wall biogenesis; peptidoglycan biosynthesis. Its function is as follows. Cell wall formation. The sequence is that of UDP-N-acetylmuramate--L-alanine ligase from Parasynechococcus marenigrum (strain WH8102).